Reading from the N-terminus, the 96-residue chain is Small ubiquitin-related modifier 2 (96 aa).

A Glycyl lysine isopeptide (Lys-Gly) (interchain with G-Cter in SUMO) cross-link involves residue Lys-11. The region spanning 16-96 is the Ubiquitin-like domain; that stretch reads DHINLKVAGQ…FQQQTGGHRI (81 aa). Gly-93 is covalently cross-linked (Glycyl lysine isopeptide (Gly-Lys) (interchain with K-? in acceptor proteins)). The propeptide occupies 94-96; it reads HRI.

It belongs to the ubiquitin family. SUMO subfamily. In terms of assembly, interacts with sae2 and ube2i. Covalently attached to a number of proteins. In terms of processing, polymeric chains can be formed through Lys-11 cross-linking. Post-translationally, cleavage of precursor form by a sentrin-specific protease is necessary for function.

The protein resides in the nucleus. In terms of biological role, ubiquitin-like protein that can be covalently attached to proteins as a monomer or as a lysine-linked polymer. Covalent attachment via an isopeptide bond to its substrates requires prior activation by the E1 complex sae1-sae2 and linkage to the E2 enzyme ube2i, and can be promoted by an E3 ligase such as pias1-4. This post-translational modification on lysine residues of proteins plays a crucial role in a number of cellular processes such as nuclear transport, DNA replication and repair, mitosis and signal transduction. Polymeric sumo2 chains are also susceptible to polyubiquitination which functions as a signal for proteasomal degradation of modified proteins. The chain is Small ubiquitin-related modifier 2 from Danio rerio (Zebrafish).